Consider the following 219-residue polypeptide: MSFNSNASKYQAENTVDKLFSNILHTSTTSKSVSKSKSKSKSKPKPISSTQLLVNQLQSTNTTANNNNTKRKKHNNNKRINKTLLEEKKFSKFIKYNHIKQKSNKSELDEKYLNKLVRKNINSLNKINKIDDLLIDEELNQIKQELLEENEFVGMGGGQLKGGKRLRKKLLNNTKQVIDEFDGFGEISSSNNNNKKKNSSHPGLTPGLAPVDYEEEDDE.

Disordered regions lie at residues 27–51, 60–79, and 184–219; these read STTSKSVSKSKSKSKSKPKPISSTQ, TNTTANNNNTKRKKHNNNKR, and FGEISSSNNNNKKKNSSHPGLTPGLAPVDYEEEDDE. Composition is skewed to basic residues over residues 34 to 44 and 69 to 79; these read SKSKSKSKSKP and TKRKKHNNNKR.

The protein belongs to the RRT14 family.

The protein localises to the nucleus. The protein resides in the nucleolus. Its function is as follows. Involved in ribosome biogenesis, probably through modulation of rDNA transcription. The protein is Regulator of rDNA transcription 14 (RRT14) of Candida albicans (strain WO-1) (Yeast).